A 265-amino-acid polypeptide reads, in one-letter code: MEMO1 family protein Mbar_A1422 (265 aa).

The protein belongs to the MEMO1 family.

In Methanosarcina barkeri (strain Fusaro / DSM 804), this protein is MEMO1 family protein Mbar_A1422.